The sequence spans 1340 residues: MPEGARGLSLPKPSLRLGCGHQGEVCDCAAVSDTPTAQAATTMASPRGSGSSTSLSTVGSEGDPSPACSASRPEPLPEPPIRLHLLPVGIQGSVKPSRLERVAREIVETERAYVRDLRSIVEDYLGPLMDGRALGLNMEQVGTLFANIEDIYEFSSELLEDLEGCSSAGGIAECFVQRSEDFDIYTLYCMNYPSSLALLRELSVSPPATLWLQERQAQLRHSLPLQSFLLKPVQRILKYHLLLQELGKHWAEGPDSGGREMVEEAIVSMTAVAWYINDMKRKQEHAARLQEVQRRLGGWTGPELSAFGELVLEGTFRGGGGGGPRLRGGERLLFLFSRMLLVAKRRGPEYTYKGHIFCCNLSVSETPRDPLGFKVSDLTIPKHRHLFQAKNQEEKRLWIHCLQRLFFENHPASIPAKAKQVLLENSLHCAPKSKHIPEPPTSPLDSPRPRDAPGFTPGRRNPAPSPRLSGSRRGRRQSEPAKEAYVIFPQNDKPQVKHAGSEGELHPSSELQPVSASGLPEDLEDAGPPTLDPSGTSITEEILELLNQRGLRDSGPATHDIPKFPRDSRVPVESEPLPFQSLPSRESSEEEEEEDLETDEREPSPLHVLEGLEGSSAAEIPCIPSLTDIPSEVPSLPEIPEAPCLPCLSDISGVFEVPCLSPTSTVPDIPSLATTPSFPCGSWLPGPLQEAAQPQATRRELLSGSNPGRLSESPSESREGQEDDTEGVSFSAVQREAGTSVQGFPEELEYRSCSEIRSAWQALEQGQLARPGFPEPLLILEDSDLRGGSTSGKTGMPHSERSASRVRELARLYSERIQQMQRAETRASTNAPRRRPRVLAQPQPSPCPPQEEAEPGALPAFGHVLVCELAFPLNCTQESVPLGPAVLVQAATPLCIQGDDLSGQNLNVSDLSKQGHLSSNSIPPPVPLPGQSNFQNIQVPSTSLLPKQEPPDVQVPTASTLPDTSQLQSQVPAATPSAGHRNCVEIQVQSTTSLPGQECQADTVALSKQEGHEDSQNPNKAPGAEQRDVSIDQGLAVVGGRPVSPLPVCTSSPDQQIPATTPLPLSTDFPDMEGPGALPLPTQEGRPDCSIPCNPLPSLSQDVQVPAVIPVSQLQGLTDTRATVPLSSHKQEDAPECLGPEPSLTDTPAPRLLSSLGQQNTTDGPVSAAAVPLTEQGCSQDLQGLITSPVQTTMELPKPRGLVSRVATSESLDLTPPHSPSLSTRQLLGPSAAALSRYLAASYISQSLARRQGPGGEGTVASQGHWSSSAPTSRAPSPPPQPQPPAPPARRLSYATTVSIQVGGGGRLRPAKAQVRLNHPALLAAPHPGAVGPSQGPGGS.

The span at 34-44 (TPTAQAATTMA) shows a compositional bias: polar residues. The tract at residues 34 to 76 (TPTAQAATTMASPRGSGSSTSLSTVGSEGDPSPACSASRPEPL) is disordered. Over residues 45-62 (SPRGSGSSTSLSTVGSEG) the composition is skewed to low complexity. One can recognise a DH domain in the interval 98 to 279 (RLERVAREIV…TAVAWYINDM (182 aa)). The PH domain maps to 309-407 (ELVLEGTFRG…WIHCLQRLFF (99 aa)). 7 disordered regions span residues 431 to 623 (PKSK…IPCI), 684 to 743 (LPGP…SVQG), 820 to 855 (MQRA…EAEP), 907 to 979 (NVSD…PSAG), 991 to 1028 (TTSL…EQRD), 1047 to 1069 (PVCT…STDF), and 1125 to 1146 (PLSS…SLTD). T441 carries the phosphothreonine modification. Phosphoserine occurs at positions 446 and 465. Residues 560–572 (DIPKFPRDSRVPV) show a composition bias toward basic and acidic residues. Positions 588 to 600 (SEEEEEEDLETDE) are enriched in acidic residues. Polar residues-rich tracts occupy residues 703-714 (SGSNPGRLSESP), 820-831 (MQRAETRASTNA), 907-921 (NVSD…SSNS), 930-945 (GQSN…TSLL), and 956-972 (PTAS…SQVP). The span at 1049–1059 (CTSSPDQQIPA) shows a compositional bias: polar residues. T1215 is modified (phosphothreonine). Phosphoserine is present on residues S1219 and S1269. The interval 1250–1340 (RRQGPGGEGT…VGPSQGPGGS (91 aa)) is disordered. Over residues 1276-1288 (PSPPPQPQPPAPP) the composition is skewed to pro residues. A compositionally biased stretch (low complexity) spans 1319–1333 (HPALLAAPHPGAVGP).

Expressed in thymus, skeletal muscle, lung, testis, uterus, pancreas and heart and also expressed during embryogenesis.

In terms of biological role, may be a transforming oncogene with exchange activity for CDC42. May be a guanine-nucleotide exchange factor (GEF) for RAC1 and CDC42. Activated by the binding to subunits beta and gamma of the heterotrimeric guanine nucleotide-binding protein (G protein). Involved in the regulation of actin polymerization. This is Pleckstrin homology domain-containing family G member 2 (Plekhg2) from Mus musculus (Mouse).